Consider the following 509-residue polypeptide: ATP synthase subunit alpha (509 aa).

169 to 176 (GDRQTGKT) serves as a coordination point for ATP.

It belongs to the ATPase alpha/beta chains family. F-type ATPases have 2 components, CF(1) - the catalytic core - and CF(0) - the membrane proton channel. CF(1) has five subunits: alpha(3), beta(3), gamma(1), delta(1), epsilon(1). CF(0) has three main subunits: a(1), b(2) and c(9-12). The alpha and beta chains form an alternating ring which encloses part of the gamma chain. CF(1) is attached to CF(0) by a central stalk formed by the gamma and epsilon chains, while a peripheral stalk is formed by the delta and b chains.

The protein resides in the cell inner membrane. The enzyme catalyses ATP + H2O + 4 H(+)(in) = ADP + phosphate + 5 H(+)(out). In terms of biological role, produces ATP from ADP in the presence of a proton gradient across the membrane. The alpha chain is a regulatory subunit. In Methylobacterium sp. (strain 4-46), this protein is ATP synthase subunit alpha.